The chain runs to 597 residues: Formate--tetrahydrofolate ligase (597 aa).

84–91 is a binding site for ATP; sequence TPLGEGKS.

This sequence belongs to the formate--tetrahydrofolate ligase family.

The enzyme catalyses (6S)-5,6,7,8-tetrahydrofolate + formate + ATP = (6R)-10-formyltetrahydrofolate + ADP + phosphate. The protein operates within one-carbon metabolism; tetrahydrofolate interconversion. This is Formate--tetrahydrofolate ligase from Dehalococcoides mccartyi (strain ATCC BAA-2266 / KCTC 15142 / 195) (Dehalococcoides ethenogenes (strain 195)).